The primary structure comprises 330 residues: 4-hydroxythreonine-4-phosphate dehydrogenase (330 aa).

Substrate is bound by residues His-136 and Thr-137. A divalent metal cation contacts are provided by His-166, His-211, and His-266. Residues Lys-274, Asn-283, and Arg-292 each coordinate substrate.

This sequence belongs to the PdxA family. In terms of assembly, homodimer. Zn(2+) is required as a cofactor. Mg(2+) serves as cofactor. It depends on Co(2+) as a cofactor.

It is found in the cytoplasm. It catalyses the reaction 4-(phosphooxy)-L-threonine + NAD(+) = 3-amino-2-oxopropyl phosphate + CO2 + NADH. Its pathway is cofactor biosynthesis; pyridoxine 5'-phosphate biosynthesis; pyridoxine 5'-phosphate from D-erythrose 4-phosphate: step 4/5. In terms of biological role, catalyzes the NAD(P)-dependent oxidation of 4-(phosphooxy)-L-threonine (HTP) into 2-amino-3-oxo-4-(phosphooxy)butyric acid which spontaneously decarboxylates to form 3-amino-2-oxopropyl phosphate (AHAP). In Serratia proteamaculans (strain 568), this protein is 4-hydroxythreonine-4-phosphate dehydrogenase.